We begin with the raw amino-acid sequence, 500 residues long: Inner membrane transporter YjeM (500 aa).

Residues 1-10 (MTHTIKKMSL) lie on the Cytoplasmic side of the membrane. A helical transmembrane segment spans residues 11-31 (IGLILMIFTSVFGFANSPSAF). At 32-37 (YLMGYS) the chain is on the periplasmic side. A helical membrane pass occupies residues 38–58 (AIPWYIFSALLFFIPFALMMA). At 59-83 (EMGSAYRKEEGGIYSWMNNSVGPRY) the chain is on the cytoplasmic side. Residues 84 to 104 (AFIGTFMWFSSYVIWMVSTAA) traverse the membrane as a helical segment. The Periplasmic segment spans residues 105–124 (KIWVPFSTFVFGADMTQHWR). A helical membrane pass occupies residues 125–145 (IAGLEPTQVVGLLAVGWMILV). Over 146–163 (TCVAARGINKIARITAVG) the chain is Cytoplasmic. Residues 164–184 (GIAVMCLNLVLLLVSVAILLL) traverse the membrane as a helical segment. At 185–209 (NGGHFAQEINFTSSPNPGYHSGLAM) the chain is on the periplasmic side. The helical transmembrane segment at 210 to 230 (LSFVVFAIFAYGGIEAVGGLV) threads the bilayer. At 231 to 243 (DKTEKPEKNFAKG) the chain is on the cytoplasmic side. Residues 244-264 (IVFAAIVISIGYSLAIFLWGV) traverse the membrane as a helical segment. The Periplasmic portion of the chain corresponds to 265–308 (STNWQQILSNSAVNLGNITYILMSSLGTTLGNALNLSPEAAMTV). A helical transmembrane segment spans residues 309–329 (GVWFARITGLSMFLAYTGAFF). At 330–361 (TLSYSPLKAIIQGTPKALWPAPMTTLNANGMP) the chain is on the cytoplasmic side. Residues 362-382 (ATAMWLQCVLVSLFILLVSFG) traverse the membrane as a helical segment. The Periplasmic portion of the chain corresponds to 383–394 (GDTASAFYNKLT). Residues 395 to 415 (LMANVSMTLPYLFLALAFPFF) form a helical membrane-spanning segment. At 416–433 (KARQDLERPFVLFKTKAS) the chain is on the cytoplasmic side. The chain crosses the membrane as a helical span at residues 434 to 454 (TLVATGVVVLVVTFANVFTII). The Periplasmic segment spans residues 455–462 (QPVIEAGD). The helical transmembrane segment at 463–483 (WDSALWMIGGPIFFSLLAMAI) threads the bilayer. At 484 to 500 (YQNYSSRMSADPEWAAE) the chain is on the cytoplasmic side.

This sequence belongs to the amino acid-polyamine-organocation (APC) superfamily.

The protein localises to the cell inner membrane. This is Inner membrane transporter YjeM (yjeM) from Salmonella typhi.